The chain runs to 417 residues: MNIYAVGGAIRDELLGMPVQDRDYVVVGATPEQMIAQGFRPVGKDFPVFLHPDTQEEYALARTERKTSAGYHGFQFFYAPDVTLEDDLARRDLTINAMAREVTPDGALIGPVIDPFNGREDLEHRVFRHVSDAFLEDPVRILRVARFSARFADFSVAPETLALMRKMVEAGEVDALVPERVWQEVSRGLMEKKPSRMFEVLRDCGALARVLPEIDALYGVPQRADYHPEVDTGVHVMMVVDHAAAQNYALAVRFAALTHDLGKATTPEDVLPRHIGHEGRSVDLLKPLCERLRVPNECRDLALLVAREHGNIHRVMETKAAGLVRLFERSDALRKPARFAEALQACEADARGRLGFEANAYPQAERLRQALVAARAVDAGAVAKSYENSPAEIKDAVHRERVRAVAKALNEAPSGQA.

ATP-binding residues include glycine 8 and arginine 11. Residues glycine 8 and arginine 11 each coordinate CTP. Aspartate 21 and aspartate 23 together coordinate Mg(2+). 3 residues coordinate ATP: arginine 91, arginine 143, and arginine 146. CTP contacts are provided by arginine 91, arginine 143, and arginine 146. The 102-residue stretch at threonine 232–leucine 333 folds into the HD domain.

The protein belongs to the tRNA nucleotidyltransferase/poly(A) polymerase family. Bacterial CCA-adding enzyme type 1 subfamily. Monomer. Can also form homodimers and oligomers. It depends on Mg(2+) as a cofactor. Ni(2+) serves as cofactor.

The catalysed reaction is a tRNA precursor + 2 CTP + ATP = a tRNA with a 3' CCA end + 3 diphosphate. The enzyme catalyses a tRNA with a 3' CCA end + 2 CTP + ATP = a tRNA with a 3' CCACCA end + 3 diphosphate. Catalyzes the addition and repair of the essential 3'-terminal CCA sequence in tRNAs without using a nucleic acid template. Adds these three nucleotides in the order of C, C, and A to the tRNA nucleotide-73, using CTP and ATP as substrates and producing inorganic pyrophosphate. tRNA 3'-terminal CCA addition is required both for tRNA processing and repair. Also involved in tRNA surveillance by mediating tandem CCA addition to generate a CCACCA at the 3' terminus of unstable tRNAs. While stable tRNAs receive only 3'-terminal CCA, unstable tRNAs are marked with CCACCA and rapidly degraded. The polypeptide is Multifunctional CCA protein (Paraburkholderia phymatum (strain DSM 17167 / CIP 108236 / LMG 21445 / STM815) (Burkholderia phymatum)).